We begin with the raw amino-acid sequence, 235 residues long: Pyridoxine 5'-phosphate synthase (235 aa).

Position 6 (asparagine 6) interacts with 3-amino-2-oxopropyl phosphate. Position 8 to 9 (aspartate 8 to histidine 9) interacts with 1-deoxy-D-xylulose 5-phosphate. Arginine 17 serves as a coordination point for 3-amino-2-oxopropyl phosphate. The active-site Proton acceptor is histidine 42. Positions 44 and 49 each coordinate 1-deoxy-D-xylulose 5-phosphate. Residue glutamate 69 is the Proton acceptor of the active site. Threonine 99 contributes to the 1-deoxy-D-xylulose 5-phosphate binding site. The active-site Proton donor is histidine 188. 3-amino-2-oxopropyl phosphate contacts are provided by residues glycine 189 and glycine 210 to histidine 211.

The protein belongs to the PNP synthase family. Homooctamer; tetramer of dimers.

It is found in the cytoplasm. The enzyme catalyses 3-amino-2-oxopropyl phosphate + 1-deoxy-D-xylulose 5-phosphate = pyridoxine 5'-phosphate + phosphate + 2 H2O + H(+). The protein operates within cofactor biosynthesis; pyridoxine 5'-phosphate biosynthesis; pyridoxine 5'-phosphate from D-erythrose 4-phosphate: step 5/5. In terms of biological role, catalyzes the complicated ring closure reaction between the two acyclic compounds 1-deoxy-D-xylulose-5-phosphate (DXP) and 3-amino-2-oxopropyl phosphate (1-amino-acetone-3-phosphate or AAP) to form pyridoxine 5'-phosphate (PNP) and inorganic phosphate. This Wolbachia sp. subsp. Drosophila simulans (strain wRi) protein is Pyridoxine 5'-phosphate synthase.